A 179-amino-acid polypeptide reads, in one-letter code: Large ribosomal subunit protein uL5 (179 aa).

This sequence belongs to the universal ribosomal protein uL5 family. In terms of assembly, part of the 50S ribosomal subunit; part of the 5S rRNA/L5/L18/L25 subcomplex. Contacts the 5S rRNA and the P site tRNA. Forms a bridge to the 30S subunit in the 70S ribosome.

Its function is as follows. This is one of the proteins that bind and probably mediate the attachment of the 5S RNA into the large ribosomal subunit, where it forms part of the central protuberance. In the 70S ribosome it contacts protein S13 of the 30S subunit (bridge B1b), connecting the 2 subunits; this bridge is implicated in subunit movement. Contacts the P site tRNA; the 5S rRNA and some of its associated proteins might help stabilize positioning of ribosome-bound tRNAs. In Syntrophus aciditrophicus (strain SB), this protein is Large ribosomal subunit protein uL5.